A 309-amino-acid chain; its full sequence is Olfactory receptor 4A47 (309 aa).

The Extracellular segment spans residues 1–23 (MEPRKNVTDFVLLGFTQNPKEQK). The N-linked (GlcNAc...) asparagine glycan is linked to N6. Residues 24-47 (VLFVMFLLFYILTMVGNLLIVVTV) form a helical membrane-spanning segment. Residues 48–55 (TVSETLGS) lie on the Cytoplasmic side of the membrane. A helical transmembrane segment spans residues 56–77 (PMYFFLAGLSFIDIIYSSSISP). At 78–98 (RLISGLFFGNNSISFQSCMAQ) the chain is on the extracellular side. The N-linked (GlcNAc...) asparagine glycan is linked to N87. C95 and C187 are oxidised to a cystine. Residues 99 to 118 (LFIEHIFGGSEVFLLLVMAY) traverse the membrane as a helical segment. Over 119–137 (DCYVAICKPLHYLVIMRQW) the chain is Cytoplasmic. Residues 138–156 (VCVVLLVVSWVGGFLHSVF) traverse the membrane as a helical segment. The Extracellular segment spans residues 157–193 (QLSIIYGLPFCGPNVIDHFFCDMYPLLKLVCTDTHAI). The chain crosses the membrane as a helical span at residues 194-217 (GLLVVANGGLACTIVFLLLLISYG). The Cytoplasmic portion of the chain corresponds to 218-233 (VILHSLKNLSQKGRQK). The chain crosses the membrane as a helical span at residues 234-256 (ALSTCSSHMTVVVFFFVPCIFMY). Residues 257-267 (ARPARTFPIDK) are Extracellular-facing. A helical transmembrane segment spans residues 268 to 287 (SVSVFYTVITPMLNPLIYTL). Over 288–309 (RNSEMTSAMKKLWRRDLISSST) the chain is Cytoplasmic.

This sequence belongs to the G-protein coupled receptor 1 family.

The protein resides in the cell membrane. Functionally, odorant receptor. In Homo sapiens (Human), this protein is Olfactory receptor 4A47 (OR4A47).